The following is a 262-amino-acid chain: Protein NEGATIVE GRAVITROPIC RESPONSE OF ROOTS (262 aa).

The disordered stretch occupies residues 1–40; the sequence is MKFFNWMQNKLGGKQENRKSNTSTSTTYAKPEPREEFSDW. Positions 43 to 49 match the IGT motif motif; sequence SLLAIGT.

This sequence belongs to the LAZY family.

In terms of biological role, involved in the control of root gravitropism. This chain is Protein NEGATIVE GRAVITROPIC RESPONSE OF ROOTS, found in Medicago truncatula (Barrel medic).